We begin with the raw amino-acid sequence, 418 residues long: Secreted aspartic protease 5 (418 aa).

Residues 1–18 (MFLKNILSVLAFALLIDA) form the signal peptide. Positions 19–76 (APVKRSPGFVTLDFNVKRSLVDPDDPTVEAKRSPLFLEFTPSEFPVDETGRDGDVDKR) are cleaved as a propeptide — activation peptide. Residues 90-404 (YTADITVGSD…NLDDKKISMA (315 aa)) enclose the Peptidase A1 domain. Residue Asp-108 is part of the active site. 108 to 110 (DTG) lines the pepstatin A pocket. The cysteines at positions 123 and 135 are disulfide-linked. 161–162 (GD) contributes to the pepstatin A binding site. Glu-268 is a binding site for Zn(2+). Asp-294 is a catalytic residue. A pepstatin A-binding site is contributed by 294-298 (DSGTT). Cys-332 and Cys-370 are oxidised to a cystine.

It belongs to the peptidase A1 family.

Its subcellular location is the secreted. It catalyses the reaction Preferential cleavage at the carboxyl of hydrophobic amino acids, but fails to cleave 15-Leu-|-Tyr-16, 16-Tyr-|-Leu-17 and 24-Phe-|-Phe-25 of insulin B chain. Activates trypsinogen, and degrades keratin.. With respect to regulation, inhibited by pepstatin A analogs. Functionally, secreted aspartic peptidases (SAPs) are a group of ten acidic hydrolases considered as key virulence factors. These enzymes supply the fungus with nutrient amino acids as well as are able to degrade the selected host's proteins involved in the immune defense. Moreover, acts toward human hemoglobin though limited proteolysis to generate a variety of antimicrobial hemocidins, enabling to compete with the other microorganisms of the same physiological niche using the microbicidal peptides generated from the host protein. The chain is Secreted aspartic protease 5 from Candida albicans (strain SC5314 / ATCC MYA-2876) (Yeast).